We begin with the raw amino-acid sequence, 127 residues long: Small ribosomal subunit protein uS11 (127 aa).

It belongs to the universal ribosomal protein uS11 family. Part of the 30S ribosomal subunit. Interacts with proteins S7 and S18. Binds to IF-3.

In terms of biological role, located on the platform of the 30S subunit, it bridges several disparate RNA helices of the 16S rRNA. Forms part of the Shine-Dalgarno cleft in the 70S ribosome. In Ehrlichia ruminantium (strain Gardel), this protein is Small ribosomal subunit protein uS11.